The following is a 230-amino-acid chain: RNA chaperone ProQ (230 aa).

Residues 105–125 (EAKARVQAQREQHQAKKREAG) are compositionally biased toward basic and acidic residues. The segment at 105-182 (EAKARVQAQR…EQRKPVTDTT (78 aa)) is disordered. Positions 154-167 (PSRPQAARPASAPR) are enriched in low complexity. The span at 168-178 (AESRVEQRKPV) shows a compositional bias: basic and acidic residues.

It belongs to the ProQ family.

The protein resides in the cytoplasm. RNA chaperone with significant RNA binding, RNA strand exchange and RNA duplexing activities. May regulate ProP activity through an RNA-based, post-transcriptional mechanism. This Erwinia tasmaniensis (strain DSM 17950 / CFBP 7177 / CIP 109463 / NCPPB 4357 / Et1/99) protein is RNA chaperone ProQ.